Reading from the N-terminus, the 788-residue chain is Bifunctional purine biosynthetic protein ADE1 (788 aa).

Residues 1 to 429 (MSLRILLVGN…NRKDIAYKAF (429 aa)) are GARS. The ATP-grasp domain occupies 114 to 323 (KDFMKKHNIP…LAEVMLACVE (210 aa)). An ATP-binding site is contributed by 140–201 (VKKVGHRVVI…EEFLEGDELS (62 aa)). Mg(2+) is bound by residues glutamate 291 and asparagine 293. Residues 439–752 (ITYAQAGVSI…VVKQEKVAEV (314 aa)) form an AIRS region.

It in the N-terminal section; belongs to the GARS family. This sequence in the C-terminal section; belongs to the AIR synthase family. The cofactor is Mg(2+). It depends on Mn(2+) as a cofactor.

Its subcellular location is the cytoplasm. It localises to the cytosol. The catalysed reaction is 5-phospho-beta-D-ribosylamine + glycine + ATP = N(1)-(5-phospho-beta-D-ribosyl)glycinamide + ADP + phosphate + H(+). It carries out the reaction 2-formamido-N(1)-(5-O-phospho-beta-D-ribosyl)acetamidine + ATP = 5-amino-1-(5-phospho-beta-D-ribosyl)imidazole + ADP + phosphate + H(+). The protein operates within purine metabolism; IMP biosynthesis via de novo pathway; 5-amino-1-(5-phospho-D-ribosyl)imidazole from N(2)-formyl-N(1)-(5-phospho-D-ribosyl)glycinamide: step 2/2. Its pathway is purine metabolism; IMP biosynthesis via de novo pathway; N(1)-(5-phospho-D-ribosyl)glycinamide from 5-phospho-alpha-D-ribose 1-diphosphate: step 2/2. Its function is as follows. Catalyzes the second and fifth step in the 'de novo' purine biosynthesis pathway; contains phosphoribosylamine--glycine ligase (GARS) and phosphoribosylformylglycinamidine cyclo-ligase (AIRS) activities. This chain is Bifunctional purine biosynthetic protein ADE1, found in Yarrowia lipolytica (strain CLIB 122 / E 150) (Yeast).